The sequence spans 112 residues: Large ribosomal subunit protein P2 (112 aa).

The disordered stretch occupies residues V81–G112. A compositionally biased stretch (basic and acidic residues) spans A84–K95. Over residues K96–L106 the composition is skewed to acidic residues.

The protein belongs to the eukaryotic ribosomal protein P1/P2 family. In terms of assembly, P1 and P2 exist as dimers at the large ribosomal subunit. Phosphorylated.

In terms of biological role, plays an important role in the elongation step of protein synthesis. The polypeptide is Large ribosomal subunit protein P2 (MAL3P3.19) (Plasmodium falciparum (isolate 3D7)).